Consider the following 122-residue polypeptide: Acidic phospholipase A2 5 (122 aa).

Cystine bridges form between cysteine 26–cysteine 115, cysteine 28–cysteine 44, cysteine 43–cysteine 95, cysteine 49–cysteine 122, cysteine 50–cysteine 88, cysteine 57–cysteine 81, and cysteine 75–cysteine 86. Phenylalanine 27, glycine 29, and glycine 31 together coordinate Ca(2+). The active site involves histidine 47. Aspartate 48 lines the Ca(2+) pocket. Aspartate 89 is a catalytic residue.

It belongs to the phospholipase A2 family. Group II subfamily. D49 sub-subfamily. Monomer (predominant). Non-covalently linked homodimers are also observed. Ca(2+) serves as cofactor. As to expression, expressed by the venom gland.

Its subcellular location is the secreted. It carries out the reaction a 1,2-diacyl-sn-glycero-3-phosphocholine + H2O = a 1-acyl-sn-glycero-3-phosphocholine + a fatty acid + H(+). Its activity is regulated as follows. Preincubation with heparin slightly increase the enzymatic activity. Its function is as follows. Snake venom phospholipase A2 (PLA2) that inhibits platelet aggregation induced by ADP, arachidonic acid and PAF. Acts in a enzymatic independent manner on a proteinase-activated receptor (PAR1, F2R) to evoke calcium release through the inositol 1,4,5-trisphosphate receptor (ITPR1, IP3R) and induces mouse aorta contraction. PAR1, phospholipase C and IP3R inhibitors suppress PA2-induced aorta contraction. PLA2 catalyzes the calcium-dependent hydrolysis of the 2-acyl groups in 3-sn-phosphoglycerides. The chain is Acidic phospholipase A2 5 from Trimeresurus stejnegeri (Chinese green tree viper).